The primary structure comprises 168 residues: ATP synthase subunit b, chloroplastic (168 aa).

Residues 20 to 37 form a helical membrane-spanning segment; it reads LNLAVVLPIVFTLGRDTL.

This sequence belongs to the ATPase B chain family. As to quaternary structure, F-type ATPases have 2 components, F(1) - the catalytic core - and F(0) - the membrane proton channel. F(1) has five subunits: alpha(3), beta(3), gamma(1), delta(1), epsilon(1). F(0) has four main subunits: a(1), b(1), b'(1) and c(10-14). The alpha and beta chains form an alternating ring which encloses part of the gamma chain. F(1) is attached to F(0) by a central stalk formed by the gamma and epsilon chains, while a peripheral stalk is formed by the delta, b and b' chains.

It localises to the plastid. It is found in the chloroplast thylakoid membrane. Its function is as follows. F(1)F(0) ATP synthase produces ATP from ADP in the presence of a proton or sodium gradient. F-type ATPases consist of two structural domains, F(1) containing the extramembraneous catalytic core and F(0) containing the membrane proton channel, linked together by a central stalk and a peripheral stalk. During catalysis, ATP synthesis in the catalytic domain of F(1) is coupled via a rotary mechanism of the central stalk subunits to proton translocation. Functionally, component of the F(0) channel, it forms part of the peripheral stalk, linking F(1) to F(0). This Ostreococcus tauri protein is ATP synthase subunit b, chloroplastic.